A 249-amino-acid polypeptide reads, in one-letter code: Kallikrein-7 (249 aa).

The first 21 residues, Met1–Gly21, serve as a signal peptide directing secretion. Positions Gln22–Arg25 are cleaved as a propeptide — activation peptide. The tract at residues Ile26–Lys246 is serine protease. Disulfide bonds link Cys32/Cys161, Cys51/Cys67, Cys133/Cys235, Cys140/Cys207, Cys172/Cys186, and Cys197/Cys222. Active-site charge relay system residues include His66 and Asp108. Catalysis depends on Ser201, which acts as the Charge relay system.

It belongs to the peptidase S1 family. Kallikrein subfamily. In terms of tissue distribution, expressed in skin and, at lower levels, in lung, kidney, brain, heart and spleen. In skin, expressed in high suprabasal keratinocytes and in the luminal parts of hair follicles. Not detected in liver and skeletal muscle.

It is found in the secreted. It carries out the reaction Cleavage of proteins with aromatic side chains in the P1 position.. Its activity is regulated as follows. Inhibited by Zn2+ and Cu2+ at low micromolar concentrations. Inhibited by SERPINA12. Functionally, may catalyze the degradation of intercellular cohesive structures in the cornified layer of the skin in the continuous shedding of cells from the skin surface. Specific for amino acid residues with aromatic side chains in the P1 position. Cleaves insulin A chain at '14-Tyr-|-Gln-15' and insulin B chain at '6-Leu-|-Cys-7', '16-Tyr-|-Leu-17', '25-Phe-|-Tyr-26' and '26-Tyr-|-Thr-27'. Could play a role in the activation of precursors to inflammatory cytokines. This Mus musculus (Mouse) protein is Kallikrein-7 (Klk7).